Reading from the N-terminus, the 355-residue chain is Uroporphyrinogen decarboxylase (355 aa).

Substrate contacts are provided by residues 27 to 31, D77, Y154, T209, and H328; that span reads RQAGR.

It belongs to the uroporphyrinogen decarboxylase family. As to quaternary structure, homodimer.

It localises to the cytoplasm. The catalysed reaction is uroporphyrinogen III + 4 H(+) = coproporphyrinogen III + 4 CO2. It functions in the pathway porphyrin-containing compound metabolism; protoporphyrin-IX biosynthesis; coproporphyrinogen-III from 5-aminolevulinate: step 4/4. In terms of biological role, catalyzes the decarboxylation of four acetate groups of uroporphyrinogen-III to yield coproporphyrinogen-III. This chain is Uroporphyrinogen decarboxylase, found in Aliivibrio fischeri (strain ATCC 700601 / ES114) (Vibrio fischeri).